The following is a 496-amino-acid chain: Hemophilin secretion modulator (496 aa).

A signal peptide spans 1–19 (MKRTLLCCLTLLSCPFLYA). A run of 14 beta stranded transmembrane segments spans residues 198-208 (WQGSVSAGYTY), 253-263 (DYEASLIKRYA), 268-277 (HGVALRALAF), 291-301 (TININAGYSYF), 305-315 (NQIGVSPLFEH), 327-337 (WGARAEWMHFI), 341-351 (KAFKLEAESKD), 365-374 (SSAFATFWKI), 380-389 (TFFGGLDVLD), 403-413 (QGVRLGLSKSW), 418-427 (NTTLLSSYRW), 446-455 (QNHTFVVQMP), 462-472 (MTPNLTYRYNH), and 486-495 (HNISFKLEHR).

Belongs to the Slam family.

It is found in the cell outer membrane. In terms of biological role, part of a high affinity heme acquisition system. Mediates the secretion of the hemophilin HphA across the outer membrane into the extracellular environment. Plays a supporting role for full virulence. This Acinetobacter baumannii protein is Hemophilin secretion modulator.